A 136-amino-acid chain; its full sequence is NADPH-dependent 7-cyano-7-deazaguanine reductase (136 aa).

Cys50 serves as the catalytic Thioimide intermediate. Residue Asp57 is the Proton donor of the active site. Substrate is bound by residues 72–74 and 91–92; these read YEL and HE.

Belongs to the GTP cyclohydrolase I family. QueF type 1 subfamily.

The protein localises to the cytoplasm. The catalysed reaction is 7-aminomethyl-7-carbaguanine + 2 NADP(+) = 7-cyano-7-deazaguanine + 2 NADPH + 3 H(+). Its pathway is tRNA modification; tRNA-queuosine biosynthesis. Catalyzes the NADPH-dependent reduction of 7-cyano-7-deazaguanine (preQ0) to 7-aminomethyl-7-deazaguanine (preQ1). This Prochlorococcus marinus (strain MIT 9215) protein is NADPH-dependent 7-cyano-7-deazaguanine reductase.